A 199-amino-acid polypeptide reads, in one-letter code: Probable chemoreceptor glutamine deamidase CheD (199 aa).

It belongs to the CheD family.

The enzyme catalyses L-glutaminyl-[protein] + H2O = L-glutamyl-[protein] + NH4(+). Probably deamidates glutamine residues to glutamate on methyl-accepting chemotaxis receptors (MCPs), playing an important role in chemotaxis. This chain is Probable chemoreceptor glutamine deamidase CheD, found in Cereibacter sphaeroides (strain ATCC 17023 / DSM 158 / JCM 6121 / CCUG 31486 / LMG 2827 / NBRC 12203 / NCIMB 8253 / ATH 2.4.1.) (Rhodobacter sphaeroides).